Consider the following 2095-residue polypeptide: Oxygen-regulated protein 1 (2095 aa).

Doublecortin domains lie at 35-117 (KRIS…VDLD) and 157-236 (RRLV…GNYD). Disordered regions lie at residues 358 to 379 (GLSN…DYGP), 643 to 688 (ENRK…GKIP), 863 to 887 (GAEV…PDFP), 1400 to 1430 (NKKK…SSER), and 1572 to 1595 (SGYP…EPTR). A compositionally biased stretch (basic and acidic residues) spans 1405 to 1419 (ISSDKEESRTSEEPR). A compositionally biased stretch (polar residues) spans 1420 to 1430 (SITNSMTSSER). Residues 1583–1595 (HNDDSGQEKEPTR) show a composition bias toward basic and acidic residues.

Interacts (via the doublecortin domains) with microtubules. Interacts with RP1L1. Interacts with MAK. As to expression, expressed in the cell bodies and inner segments of photoreceptors. Not found in liver, spleen, kidney, brain, thymus, muscle, heart, lung and testis.

It localises to the cytoplasm. It is found in the cytoskeleton. The protein resides in the cilium axoneme. The protein localises to the cell projection. Its subcellular location is the cilium. It localises to the photoreceptor outer segment. In terms of biological role, microtubule-associated protein regulating the stability and length of the microtubule-based axoneme of photoreceptors. Required for the differentiation of photoreceptor cells, it plays a role in the organization of the outer segment of rod and cone photoreceptors ensuring the correct orientation and higher-order stacking of outer segment disks along the photoreceptor axoneme. The polypeptide is Oxygen-regulated protein 1 (Rp1) (Mus musculus (Mouse)).